A 159-amino-acid polypeptide reads, in one-letter code: Small ribosomal subunit protein uS5c (159 aa).

The S5 DRBM domain occupies 17–80; sequence WEERVVSVQR…TDGKKNVITV (64 aa).

It belongs to the universal ribosomal protein uS5 family. As to quaternary structure, part of the 30S ribosomal subunit. Contacts protein S4.

The protein resides in the plastid. The protein localises to the chloroplast. Its function is as follows. With S4 and S12 plays an important role in translational accuracy. The polypeptide is Small ribosomal subunit protein uS5c (rps5) (Emiliania huxleyi (Coccolithophore)).